A 300-amino-acid polypeptide reads, in one-letter code: Porphobilinogen deaminase (300 aa).

S-(dipyrrolylmethanemethyl)cysteine is present on C239.

This sequence belongs to the HMBS family. As to quaternary structure, monomer. Dipyrromethane serves as cofactor.

It catalyses the reaction 4 porphobilinogen + H2O = hydroxymethylbilane + 4 NH4(+). It participates in porphyrin-containing compound metabolism; protoporphyrin-IX biosynthesis; coproporphyrinogen-III from 5-aminolevulinate: step 2/4. Functionally, tetrapolymerization of the monopyrrole PBG into the hydroxymethylbilane pre-uroporphyrinogen in several discrete steps. This chain is Porphobilinogen deaminase, found in Francisella philomiragia subsp. philomiragia (strain ATCC 25017 / CCUG 19701 / FSC 153 / O#319-036).